A 75-amino-acid chain; its full sequence is Small ribosomal subunit protein bS18 (75 aa).

Belongs to the bacterial ribosomal protein bS18 family. In terms of assembly, part of the 30S ribosomal subunit. Forms a tight heterodimer with protein bS6.

Functionally, binds as a heterodimer with protein bS6 to the central domain of the 16S rRNA, where it helps stabilize the platform of the 30S subunit. The polypeptide is Small ribosomal subunit protein bS18 (Thermosipho melanesiensis (strain DSM 12029 / CIP 104789 / BI429)).